A 673-amino-acid chain; its full sequence is MDKIKAKIDELKQKLDQWNYEYYVLDDPSVPDHVYDQTMRELIELENNYPQFKTNNSPSVKVGGFVSEKFNKVKHKRPMLSLSNAFNDDDLKKFDQDNQNASVDLKGYVVEPKIDGLSISIIYKNAKLHQAITRGDGINGEDVTSNILTIKDIPHYIDQKYKDYEIEVRGEVYMAFHDFYEMNDNLEESDKKFANPRNAAAGTLRSLDNSIVAERKLSAFMYYLVNAQELGIKTHYESIQFLRDNKFKVSDLIVKVDTINEVINQIDCYTKVRDKLSYMIDGIVIKINNLEVYDEIGYTSKFPKWAIAYKFPANVVSSQLLEIINDVGRTGKISYVAKIKPILLDGSMVEYATLHNFDFIKEKDIRINDEIKIYKAGDVIPYVDGVDLSKRLANSVPYEPIINCPSCQSVLVRENDEVDQRCLNIYGCKKINIEKIVYFVSRNCMNIEGMSDAIINKFYDANLIKNIADLYYLQKHKEFILTSDFKIKEKSFSNLINSINNSKKCSLEFLLTAFGIRHVGPNLAKKIAKQFKTMTALMHANFDELTNVDACGEKAALSLINWFNDEHNVSLVNQLQQVGVNMEYIDDFIYDDNINIIDEYKNKTFVITGSFSISRDEIKTILEKYYHAKVKNSVSKKTDYVLVGTEAGTKLEKAKLLGVKIIENEFWKKDNNF.

Residues 32 to 36 (DHVYD), 81 to 82 (SL), and glutamate 111 contribute to the NAD(+) site. Lysine 113 functions as the N6-AMP-lysine intermediate in the catalytic mechanism. NAD(+) contacts are provided by arginine 134, glutamate 171, lysine 286, and lysine 310. Cysteine 404, cysteine 407, cysteine 422, and cysteine 428 together coordinate Zn(2+). Residues 595–673 (NIIDEYKNKT…NEFWKKDNNF (79 aa)) form the BRCT domain.

The protein belongs to the NAD-dependent DNA ligase family. LigA subfamily. Requires Mg(2+) as cofactor. Mn(2+) serves as cofactor.

The catalysed reaction is NAD(+) + (deoxyribonucleotide)n-3'-hydroxyl + 5'-phospho-(deoxyribonucleotide)m = (deoxyribonucleotide)n+m + AMP + beta-nicotinamide D-nucleotide.. DNA ligase that catalyzes the formation of phosphodiester linkages between 5'-phosphoryl and 3'-hydroxyl groups in double-stranded DNA using NAD as a coenzyme and as the energy source for the reaction. It is essential for DNA replication and repair of damaged DNA. In Ureaplasma parvum serovar 3 (strain ATCC 27815 / 27 / NCTC 11736), this protein is DNA ligase.